A 136-amino-acid polypeptide reads, in one-letter code: Large ribosomal subunit protein uL16 (136 aa).

It belongs to the universal ribosomal protein uL16 family. In terms of assembly, part of the 50S ribosomal subunit.

In terms of biological role, binds 23S rRNA and is also seen to make contacts with the A and possibly P site tRNAs. The protein is Large ribosomal subunit protein uL16 of Serratia proteamaculans (strain 568).